The sequence spans 344 residues: Methionine import ATP-binding protein MetN (344 aa).

An ABC transporter domain is found at 2–241; it reads IEINQVNKVF…PKTELAHDFI (240 aa). 38-45 contributes to the ATP binding site; that stretch reads GSSGAGKS.

Belongs to the ABC transporter superfamily. Methionine importer (TC 3.A.1.24) family. As to quaternary structure, the complex is composed of two ATP-binding proteins (MetN), two transmembrane proteins (MetI) and a solute-binding protein (MetQ).

The protein localises to the cell inner membrane. The catalysed reaction is L-methionine(out) + ATP + H2O = L-methionine(in) + ADP + phosphate + H(+). The enzyme catalyses D-methionine(out) + ATP + H2O = D-methionine(in) + ADP + phosphate + H(+). Part of the ABC transporter complex MetNIQ involved in methionine import. Responsible for energy coupling to the transport system. The protein is Methionine import ATP-binding protein MetN of Vibrio vulnificus (strain YJ016).